We begin with the raw amino-acid sequence, 67 residues long: Small ribosomal subunit protein eS17 (67 aa).

This sequence belongs to the eukaryotic ribosomal protein eS17 family.

The polypeptide is Small ribosomal subunit protein eS17 (Korarchaeum cryptofilum (strain OPF8)).